We begin with the raw amino-acid sequence, 616 residues long: 1-deoxy-D-xylulose-5-phosphate synthase (616 aa).

Residues His-74 and 115-117 (GHS) contribute to the thiamine diphosphate site. A Mg(2+)-binding site is contributed by Asp-146. Thiamine diphosphate contacts are provided by residues 147–148 (GA), Asn-175, Tyr-282, and Glu-365. Asn-175 lines the Mg(2+) pocket.

This sequence belongs to the transketolase family. DXPS subfamily. As to quaternary structure, homodimer. Mg(2+) serves as cofactor. It depends on thiamine diphosphate as a cofactor.

It catalyses the reaction D-glyceraldehyde 3-phosphate + pyruvate + H(+) = 1-deoxy-D-xylulose 5-phosphate + CO2. The protein operates within metabolic intermediate biosynthesis; 1-deoxy-D-xylulose 5-phosphate biosynthesis; 1-deoxy-D-xylulose 5-phosphate from D-glyceraldehyde 3-phosphate and pyruvate: step 1/1. Catalyzes the acyloin condensation reaction between C atoms 2 and 3 of pyruvate and glyceraldehyde 3-phosphate to yield 1-deoxy-D-xylulose-5-phosphate (DXP). The polypeptide is 1-deoxy-D-xylulose-5-phosphate synthase (Chromobacterium violaceum (strain ATCC 12472 / DSM 30191 / JCM 1249 / CCUG 213 / NBRC 12614 / NCIMB 9131 / NCTC 9757 / MK)).